The following is a 494-amino-acid chain: Guanosine-5'-triphosphate,3'-diphosphate pyrophosphatase (494 aa).

It belongs to the GppA/Ppx family. GppA subfamily.

It catalyses the reaction guanosine 3'-diphosphate 5'-triphosphate + H2O = guanosine 3',5'-bis(diphosphate) + phosphate + H(+). It functions in the pathway purine metabolism; ppGpp biosynthesis; ppGpp from GTP: step 2/2. Its function is as follows. Catalyzes the conversion of pppGpp to ppGpp. Guanosine pentaphosphate (pppGpp) is a cytoplasmic signaling molecule which together with ppGpp controls the 'stringent response', an adaptive process that allows bacteria to respond to amino acid starvation, resulting in the coordinated regulation of numerous cellular activities. The polypeptide is Guanosine-5'-triphosphate,3'-diphosphate pyrophosphatase (Citrobacter koseri (strain ATCC BAA-895 / CDC 4225-83 / SGSC4696)).